The following is a 464-amino-acid chain: MIKPRTPPGTLELLPREQIAFQRMLDVIRRNYERFGFLPVETPVFELSDVLLTKSGGETERQVYFVQSTGALANAAESGDRSLPEMALRFDLTVPLARYVAEHEHELTFPFRRYQMQRVYRGERAQRGRFREFYQCDIDVIGKDSLSVRYDAEVLAVIHAVFSELRIGDFSIQLNNRKLMRGFFESLGVAEGERQLAVLREVDKLDKRGADYVRETLVGEGFEIPAEQVEKILAFVAVRSQGHADALAQLATLEADAGSSEILRTGVAELREVLQLVQALGVPETAYCLNFSIARGLDYYTGTVYETTLTDHPQIGSICSGGRYEDLASHYSKSKLPGVGISIGLSRLFWQLREAGLIDGIEGSSVQALVALMDEQGMPQSLDIARRLRAGGINTEVQMEPKKIGKQFQYAAKAGIRFVVLAGEDELARGVVAVKDLLREQQFEVSRDGLASTLQVELEQSKVM.

Belongs to the class-II aminoacyl-tRNA synthetase family. As to quaternary structure, homodimer.

It localises to the cytoplasm. The enzyme catalyses tRNA(His) + L-histidine + ATP = L-histidyl-tRNA(His) + AMP + diphosphate + H(+). The protein is Histidine--tRNA ligase of Stenotrophomonas maltophilia (strain K279a).